Reading from the N-terminus, the 90-residue chain is Probable Fe(2+)-trafficking protein (90 aa).

The protein belongs to the Fe(2+)-trafficking protein family.

Could be a mediator in iron transactions between iron acquisition and iron-requiring processes, such as synthesis and/or repair of Fe-S clusters in biosynthetic enzymes. This Halorhodospira halophila (strain DSM 244 / SL1) (Ectothiorhodospira halophila (strain DSM 244 / SL1)) protein is Probable Fe(2+)-trafficking protein.